The following is a 361-amino-acid chain: Mannose-1-phosphate guanyltransferase (361 aa).

Position 153 is a phosphothreonine (threonine 153). Lysine 244 participates in a covalent cross-link: Glycyl lysine isopeptide (Lys-Gly) (interchain with G-Cter in ubiquitin).

Belongs to the transferase hexapeptide repeat family.

The protein resides in the cytoplasm. It catalyses the reaction alpha-D-mannose 1-phosphate + GTP + H(+) = GDP-alpha-D-mannose + diphosphate. It functions in the pathway nucleotide-sugar biosynthesis; GDP-alpha-D-mannose biosynthesis; GDP-alpha-D-mannose from alpha-D-mannose 1-phosphate (GTP route): step 1/1. Involved in cell wall synthesis where it is required for glycosylation. Involved in cell cycle progression through cell-size checkpoint. In Saccharomyces cerevisiae (strain ATCC 204508 / S288c) (Baker's yeast), this protein is Mannose-1-phosphate guanyltransferase (PSA1).